The sequence spans 165 residues: DELTA-actitoxin-Oor1a (165 aa).

The segment at 1 to 17 (ATFRVLAKVLAELGKVS) is N-terminal region. Positions 41, 74, 92, 94, and 125 each coordinate phosphocholine. Residues 92-107 (SVPYDYNLYSNWWNVK) are trp-rich region, which is important for the binding to lipid membrane.

The protein belongs to the actinoporin family. Sea anemone subfamily. Octamer or nonamer in membranes. Monomer in the soluble state.

Its subcellular location is the secreted. It is found in the nematocyst. The protein resides in the target cell membrane. Its function is as follows. Pore-forming protein that forms cations-selective hydrophilic pores of around 1 nm and causes cardiac stimulation and cytolysis. Pore formation is a multi-step process that involves specific recognition of membrane sphingomyelin (but neither cholesterol nor phosphatidylcholine) using aromatic rich region and adjacent phosphocholine (POC) binding site, firm binding to the membrane (mainly driven by hydrophobic interactions) accompanied by the transfer of the N-terminal region to the lipid-water interface and finally pore formation after oligomerization of monomers. Cytolytic effects include red blood cells hemolysis, platelet aggregation and lysis, cytotoxic and cytostatic effects on fibroblasts. Lethality in mammals has been ascribed to severe vasospasm of coronary vessels, cardiac arrhythmia, and inotropic effects. The sequence is that of DELTA-actitoxin-Oor1a from Oulactis orientalis (Japan anemone).